We begin with the raw amino-acid sequence, 217 residues long: Protein GrpE (217 aa).

Belongs to the GrpE family. As to quaternary structure, homodimer.

The protein localises to the cytoplasm. Participates actively in the response to hyperosmotic and heat shock by preventing the aggregation of stress-denatured proteins, in association with DnaK and GrpE. It is the nucleotide exchange factor for DnaK and may function as a thermosensor. Unfolded proteins bind initially to DnaJ; upon interaction with the DnaJ-bound protein, DnaK hydrolyzes its bound ATP, resulting in the formation of a stable complex. GrpE releases ADP from DnaK; ATP binding to DnaK triggers the release of the substrate protein, thus completing the reaction cycle. Several rounds of ATP-dependent interactions between DnaJ, DnaK and GrpE are required for fully efficient folding. The chain is Protein GrpE from Mycoplasma pneumoniae (strain ATCC 29342 / M129 / Subtype 1) (Mycoplasmoides pneumoniae).